Reading from the N-terminus, the 262-residue chain is tRNA (guanine-N(1)-)-methyltransferase (262 aa).

Residues Gly111 and 130–135 (LGDFVL) contribute to the S-adenosyl-L-methionine site.

The protein belongs to the RNA methyltransferase TrmD family. As to quaternary structure, homodimer.

Its subcellular location is the cytoplasm. It catalyses the reaction guanosine(37) in tRNA + S-adenosyl-L-methionine = N(1)-methylguanosine(37) in tRNA + S-adenosyl-L-homocysteine + H(+). Functionally, specifically methylates guanosine-37 in various tRNAs. The chain is tRNA (guanine-N(1)-)-methyltransferase from Desulfitobacterium hafniense (strain Y51).